We begin with the raw amino-acid sequence, 253 residues long: Probable U2 small nuclear ribonucleoprotein A' (253 aa).

LRR repeat units follow at residues 20-41 (NMRE…GVTR), 43-64 (QFDV…PTFS), 65-86 (RLNT…IATK), and 89-110 (NLKT…EPLA). The LRRCT domain occupies 123–161 (NPITHKDNYRMYMIYKLPTVRVIDFNRVRLTEREAAKKM). Disordered stretches follow at residues 163–205 (KGKS…EDRE) and 232–253 (VPEK…AMES). A compositionally biased stretch (basic and acidic residues) spans 169 to 182 (KARDAIQKSVHTED).

The protein belongs to the U2 small nuclear ribonucleoprotein A family. Interacts with rnp-3.

It localises to the nucleus. Its function is as follows. This protein is associated with sn-RNP U2. It helps the A' protein to bind stem loop IV of U2 snRNA. Required maternally for early embryonic development and zygotically for germline and somatic development. Has a role in the switch from mitosis to meiosis. Might function in alternative splicing. The protein is Probable U2 small nuclear ribonucleoprotein A' (mog-2) of Caenorhabditis elegans.